Consider the following 736-residue polypeptide: Elongation factor 2 (736 aa).

Residues 19-262 (DQIRNIGIIA…MVIKFVPNPR (244 aa)) form the tr-type G domain. GTP-binding positions include 28–35 (AHVDHGKT), 94–98 (DTPGH), and 148–151 (NKVD). Position 602 is a diphthamide (H602).

The protein belongs to the TRAFAC class translation factor GTPase superfamily. Classic translation factor GTPase family. EF-G/EF-2 subfamily.

It is found in the cytoplasm. Functionally, catalyzes the GTP-dependent ribosomal translocation step during translation elongation. During this step, the ribosome changes from the pre-translocational (PRE) to the post-translocational (POST) state as the newly formed A-site-bound peptidyl-tRNA and P-site-bound deacylated tRNA move to the P and E sites, respectively. Catalyzes the coordinated movement of the two tRNA molecules, the mRNA and conformational changes in the ribosome. The sequence is that of Elongation factor 2 (fusA) from Aeropyrum pernix (strain ATCC 700893 / DSM 11879 / JCM 9820 / NBRC 100138 / K1).